A 209-amino-acid chain; its full sequence is 2,3-bisphosphoglycerate-dependent phosphoglycerate mutase (209 aa).

Residues 8-15 (RHGQSEGN), 21-22 (TG), arginine 60, 87-90 (ERDY), lysine 98, 114-115 (RR), and 158-159 (GN) each bind substrate. The active-site Tele-phosphohistidine intermediate is histidine 9. Glutamate 87 (proton donor/acceptor) is an active-site residue.

Belongs to the phosphoglycerate mutase family. BPG-dependent PGAM subfamily. As to quaternary structure, homodimer.

The catalysed reaction is (2R)-2-phosphoglycerate = (2R)-3-phosphoglycerate. Its pathway is carbohydrate degradation; glycolysis; pyruvate from D-glyceraldehyde 3-phosphate: step 3/5. Functionally, catalyzes the interconversion of 2-phosphoglycerate and 3-phosphoglycerate. The sequence is that of 2,3-bisphosphoglycerate-dependent phosphoglycerate mutase from Rhizobium etli (strain ATCC 51251 / DSM 11541 / JCM 21823 / NBRC 15573 / CFN 42).